The following is a 208-amino-acid chain: MEERSGVLETSRSCKQLIGPEGSDKEFEGYIDSNLRVVETFLRLFPIGLCVTALVIMLKNSQENKYGSVSYTDLGAFRYLVHANGICAGYSLFSAIFVALPRLSSVHIAWTFFVLDQVLTYIILSAGAASAEVLYLAEKGNMATAWSSACRSFGPFCHKVTASTTITFVVVVFYVLLSLISSYKLFSKYDAPTVSNPSMGADIVAFHG.

Topologically, residues M1–R36 are cytoplasmic. The chain crosses the membrane as a helical span at residues V37–M57. Residues L58–Y79 lie on the Extracellular side of the membrane. The helical transmembrane segment at L80 to L100 threads the bilayer. Residues P101–H107 lie on the Cytoplasmic side of the membrane. The helical transmembrane segment at I108–A128 threads the bilayer. The Extracellular portion of the chain corresponds to A129–K159. The helical transmembrane segment at V160–I180 threads the bilayer. The Cytoplasmic portion of the chain corresponds to S181–G208.

Belongs to the Casparian strip membrane proteins (CASP) family. In terms of assembly, homodimer and heterodimers.

It localises to the cell membrane. The protein is CASP-like protein 2A1 of Glycine max (Soybean).